The following is a 340-amino-acid chain: Cysteinyl leukotriene receptor 1 (340 aa).

The Extracellular segment spans residues Met1 to Thr31. An N-linked (GlcNAc...) asparagine glycan is attached at Asn14. Residues Leu32–Val52 traverse the membrane as a helical segment. Residues Lys53–Ala60 lie on the Cytoplasmic side of the membrane. The helical transmembrane segment at Phe61–Leu81 threads the bilayer. Over Arg82–Asn109 the chain is Extracellular. Residues Cys99 and Cys176 are joined by a disulfide bond. The helical transmembrane segment at Leu110 to Phe130 threads the bilayer. The Cytoplasmic portion of the chain corresponds to Pro131 to Arg144. Residues Leu145–Asn165 traverse the membrane as a helical segment. At Thr166 to Ser196 the chain is on the extracellular side. Asn172 carries an N-linked (GlcNAc...) asparagine glycan. The chain crosses the membrane as a helical span at residues Leu197–Phe217. Residues Thr218–Arg233 are Cytoplasmic-facing. A helical transmembrane segment spans residues Ala234–Ile254. Topologically, residues Gln255–Ser279 are extracellular. N-linked (GlcNAc...) asparagine glycosylation is present at Asn265. Residues Val280–Phe300 traverse the membrane as a helical segment. Over Ser301–Glu340 the chain is Cytoplasmic.

The protein belongs to the G-protein coupled receptor 1 family.

The protein localises to the cell membrane. In terms of biological role, receptor for cysteinyl leukotrienes mediating bronchoconstriction of individuals with and without asthma. Stimulation by LTD4 results in the contraction and proliferation of smooth muscle, edema, eosinophil migration and damage to the mucus layer in the lung. This response is mediated via a G-protein that activates a phosphatidylinositol-calcium second messenger system. The chain is Cysteinyl leukotriene receptor 1 (CYSLTR1) from Cavia porcellus (Guinea pig).